A 92-amino-acid polypeptide reads, in one-letter code: Small ribosomal subunit protein uS19 (92 aa).

The protein belongs to the universal ribosomal protein uS19 family.

Functionally, protein S19 forms a complex with S13 that binds strongly to the 16S ribosomal RNA. The sequence is that of Small ribosomal subunit protein uS19 from Paramagnetospirillum magneticum (strain ATCC 700264 / AMB-1) (Magnetospirillum magneticum).